The sequence spans 287 residues: Large ribosomal subunit protein uL2 (287 aa).

The segment at 221–287 (RGSVMNPCDH…SKRSRGGRDS (67 aa)) is disordered. Basic residues predominate over residues 258–287 (KTRKKNKPSNKLVVRRRRRVSKRSRGGRDS).

This sequence belongs to the universal ribosomal protein uL2 family. As to quaternary structure, part of the 50S ribosomal subunit. Forms a bridge to the 30S subunit in the 70S ribosome.

Its function is as follows. One of the primary rRNA binding proteins. Required for association of the 30S and 50S subunits to form the 70S ribosome, for tRNA binding and peptide bond formation. It has been suggested to have peptidyltransferase activity; this is somewhat controversial. Makes several contacts with the 16S rRNA in the 70S ribosome. The chain is Large ribosomal subunit protein uL2 from Prochlorococcus marinus (strain AS9601).